The chain runs to 369 residues: Naringenin,2-oxoglutarate 3-dioxygenase (369 aa).

One can recognise a Fe2OG dioxygenase domain in the interval 193–297 (CVDMDQKVVV…RLSIATFQNP (105 aa)). Positions 220, 222, and 278 each coordinate Fe cation. Residue R288 coordinates 2-oxoglutarate.

Belongs to the iron/ascorbate-dependent oxidoreductase family. It depends on Fe(2+) as a cofactor. The cofactor is L-ascorbate.

It catalyses the reaction a (2S)-flavan-4-one + 2-oxoglutarate + O2 = a (2R,3R)-dihydroflavonol + succinate + CO2. It participates in secondary metabolite biosynthesis; flavonoid biosynthesis. In terms of biological role, catalyzes the 3-beta-hydroxylation of 2S-flavanones to 2R,3R-dihydroflavonols which are intermediates in the biosynthesis of flavonols, anthocyanidins, catechins and proanthocyanidins in plants. The sequence is that of Naringenin,2-oxoglutarate 3-dioxygenase (AN3) from Petunia hybrida (Petunia).